A 167-amino-acid chain; its full sequence is Small heat shock protein C1 (167 aa).

Positions 59–167 (SLYESNSIKS…EQEAREIVID (109 aa)) constitute a sHSP domain.

It belongs to the small heat shock protein (HSP20) family.

The chain is Small heat shock protein C1 (hspC1) from Rickettsia conorii (strain ATCC VR-613 / Malish 7).